Consider the following 69-residue polypeptide: DNA-directed RNA polymerase subunit epsilon (69 aa).

Belongs to the RNA polymerase subunit epsilon family. As to quaternary structure, RNAP is composed of a core of 2 alpha, a beta and a beta' subunit. The core is associated with a delta subunit, and at least one of epsilon or omega. When a sigma factor is associated with the core the holoenzyme is formed, which can initiate transcription.

The enzyme catalyses RNA(n) + a ribonucleoside 5'-triphosphate = RNA(n+1) + diphosphate. Functionally, a non-essential component of RNA polymerase (RNAP). The polypeptide is DNA-directed RNA polymerase subunit epsilon (Listeria monocytogenes serotype 4b (strain CLIP80459)).